Consider the following 576-residue polypeptide: Interleukin-1 receptor type 1 (576 aa).

The signal sequence occupies residues 1–19 (MENMKVLLGFICLIVPLLS). Ig-like C2-type domains lie at 20-115 (LETD…ITMS), 121-217 (PGLC…RVIT), and 229-331 (PVIM…VRLV). The Extracellular segment spans residues 20 to 338 (LETDKCTEYP…RLVYPVPDFK (319 aa)). 3 cysteine pairs are disulfide-bonded: C25/C107, C46/C99, and C145/C199. N63 and N103 each carry an N-linked (GlcNAc...) asparagine glycan. N-linked (GlcNAc...) asparagine glycosylation is found at N236, N252, and N266. A disulfide bridge links C251 with C315. Residues 339-359 (NYLIGGFAIFTATAVFCACIY) form a helical membrane-spanning segment. Topologically, residues 360–576 (KVFKVDIVLW…LQAETHLPLG (217 aa)) are cytoplasmic. Residues 386–541 (RTYDAYVLYP…RFWKNLRYQM (156 aa)) enclose the TIR domain. The active site involves E473. Y499 is subject to Phosphotyrosine. T556 carries the post-translational modification Phosphothreonine; by PKC.

This sequence belongs to the interleukin-1 receptor family. As to quaternary structure, the interleukin-1 receptor complex is a heterodimer of IL1R1 and IL1RAP. Interacts with PIK3R1. Interacts with IL1A. A soluble form (sIL1R1) is probably produced by proteolytic cleavage at the cell surface (shedding). In terms of processing, rapidly phosphorylated on Tyr-499 in response to IL-1, which creates a SH2 binding site for the PI 3-kinase regulatory subunit PIK3R1.

It is found in the membrane. The protein resides in the cell membrane. Its subcellular location is the secreted. It catalyses the reaction NAD(+) + H2O = ADP-D-ribose + nicotinamide + H(+). In terms of biological role, receptor for IL1A, IL1B and IL1RN. After binding to interleukin-1 associates with the coreceptor IL1RAP to form the high affinity interleukin-1 receptor complex which mediates interleukin-1-dependent activation of NF-kappa-B, MAPK and other pathways. Signaling involves the recruitment of adapter molecules such as TOLLIP, MYD88, and IRAK1 or IRAK2 via the respective TIR domains of the receptor/coreceptor subunits. Binds ligands with comparable affinity and binding of antagonist IL1RN prevents association with IL1RAP to form a signaling complex. Involved in IL1B-mediated costimulation of IFNG production from T-helper 1 (Th1) cells. In Rattus norvegicus (Rat), this protein is Interleukin-1 receptor type 1 (Il1r1).